A 457-amino-acid polypeptide reads, in one-letter code: Flavohemoprotein-2 (457 aa).

A Globin domain is found at 2-157 (ALSEDTIKAV…LADLLIKREE (156 aa)). A heme b-binding site is contributed by His106. Catalysis depends on charge relay system residues Tyr116 and Glu156. A reductase region spans residues 168–456 (GGWRQTRTFR…FEMFGPFKAS (289 aa)). An FAD-binding FR-type domain is found at 171–278 (RQTRTFRVEE…APPYGDFFLR (108 aa)). Residues Tyr210 and 227–230 (RQYS) contribute to the FAD site. 320 to 325 (GIGQTP) contacts NADP(+). 449–452 (MFGP) contacts FAD.

Belongs to the globin family. Two-domain flavohemoproteins subfamily. It in the C-terminal section; belongs to the flavoprotein pyridine nucleotide cytochrome reductase family. As to quaternary structure, monomer. The cofactor is heme b. FAD serves as cofactor.

The catalysed reaction is 2 nitric oxide + NADPH + 2 O2 = 2 nitrate + NADP(+) + H(+). It carries out the reaction 2 nitric oxide + NADH + 2 O2 = 2 nitrate + NAD(+) + H(+). Flavohemoprotein involved in nitric oxide (NO) detoxification in an aerobic process, termed nitric oxide dioxygenase (NOD) reaction that utilizes O(2) and NAD(P)H to convert NO to nitrate, which protects the protozoan parasite from various noxious nitrogen compounds. Therefore, plays a central role in the inducible response to nitrosative stress. May also be involved in O(2) detoxification. The chain is Flavohemoprotein-2 (hmpA-2) from Giardia intestinalis (strain P15) (Giardia lamblia).